A 102-amino-acid polypeptide reads, in one-letter code: Monothiol glutaredoxin-S8 (102 aa).

One can recognise a Glutaredoxin domain in the interval 1–101 (MEKIQKMISE…PMLKRFGALW (101 aa)). C21 is a [2Fe-2S] cluster binding site. The Responsive for interaction with TGA factors signature appears at 99–102 (ALWL).

Belongs to the glutaredoxin family. CC-type subfamily.

It localises to the cytoplasm. It is found in the nucleus. In terms of biological role, may only reduce GSH-thiol disulfides, but not protein disulfides. The sequence is that of Monothiol glutaredoxin-S8 (GRXS8) from Arabidopsis thaliana (Mouse-ear cress).